The following is a 422-amino-acid chain: Tyrosine--tRNA ligase 1 (422 aa).

Y36 is an L-tyrosine binding site. The 'HIGH' region signature appears at 41–50 (PTAGSLHIGH). The L-tyrosine site is built by Y173 and Q177. The 'KMSKS' region signature appears at 233–237 (KFGKT). K236 lines the ATP pocket. The S4 RNA-binding domain maps to 355–419 (SDVVTLLLET…GKKQFAMVKL (65 aa)).

It belongs to the class-I aminoacyl-tRNA synthetase family. TyrS type 1 subfamily. As to quaternary structure, homodimer.

It is found in the cytoplasm. The enzyme catalyses tRNA(Tyr) + L-tyrosine + ATP = L-tyrosyl-tRNA(Tyr) + AMP + diphosphate + H(+). In terms of biological role, catalyzes the attachment of tyrosine to tRNA(Tyr) in a two-step reaction: tyrosine is first activated by ATP to form Tyr-AMP and then transferred to the acceptor end of tRNA(Tyr). The chain is Tyrosine--tRNA ligase 1 from Vibrio vulnificus (strain CMCP6).